Here is a 252-residue protein sequence, read N- to C-terminus: MPYIDLNADLGEGFGIWQLGDDDAMLGIVTSANVACGFHAGEPAGLLRVCRAAAERGVRIGAQVGYRDLAGFGRRFIDVDPEDLVAEVVYQIGALQAIAQSCGSTVSYVKPHGALYNTIVTHRDQAAAVAEAVQMVDATLPVLGMTGSVFFQQATDLGLRTVAEAFADRAYRSDGQLVSRREHGAVLADAAAIAQRAVSMVASGKVTAVDGTQVPITMESICVHGDSPGAVQIATAVRDRLTAAGNEIRAFC.

The protein belongs to the LamB/PxpA family. In terms of assembly, forms a complex composed of PxpA, PxpB and PxpC.

The enzyme catalyses 5-oxo-L-proline + ATP + 2 H2O = L-glutamate + ADP + phosphate + H(+). Catalyzes the cleavage of 5-oxoproline to form L-glutamate coupled to the hydrolysis of ATP to ADP and inorganic phosphate. The polypeptide is 5-oxoprolinase subunit A (Mycobacterium marinum (strain ATCC BAA-535 / M)).